A 607-amino-acid polypeptide reads, in one-letter code: MRSLWIVLVLVLGSALLLQVMAASDDRIPYARFRSLAERGELAEIEIRDDMYIGRAVSGLSARAPQSYRTGRIEQTEKDLLADLDRRGIPYTRVADELGLPPYLWLLLPLAGLAAMGHLASRRATTAGTISGAATAFGKHKARLYEERGAIATFRDVAGNAEAKTELSEIVDFLKAPERYEKLGGRMPRGVLLVGPPGTGKTLLARAIAGEASVPFFSASGSEFVEMFVGVGAARVRDLFSQAREKGACLVFIDELDAVGKVRGLGGSVGGHDEREQTLNQLLTEMDGFDAHTAMVVIGATNRAEILDPALLRPGRFDRRVHIDRPDLAERKEILAVHARKVALDPGADLDAVAAQTAGLVGADLANIVNEAALLAARRGAEAVGHGDLEAAIERGLAGLERRGRRLGAREKLVVAYHEVGHALTASLLPTQDPVRKVSIVPRGPGALGYTIQQPREDRYLWSRQEILDRLVVLLGGRVAEEEAVGDLSTGAQDDLLNATELARRMVRELGMGQGLGLSALEPRRPLSFLGEAQGAMPSGAGPRECSDATARAIDAEVARILADAEARARALIQGHRPTLERVAARLYEVETLSGDELREMVASGEA.

Over 1-2 (MR) the chain is Cytoplasmic. A helical membrane pass occupies residues 3-23 (SLWIVLVLVLGSALLLQVMAA). The Periplasmic portion of the chain corresponds to 24–99 (SDDRIPYARF…PYTRVADELG (76 aa)). A helical transmembrane segment spans residues 100–120 (LPPYLWLLLPLAGLAAMGHLA). The Cytoplasmic portion of the chain corresponds to 121-607 (SRRATTAGTI…LREMVASGEA (487 aa)). 195-202 (GPPGTGKT) contributes to the ATP binding site. A Zn(2+)-binding site is contributed by His-418. Glu-419 is a catalytic residue. The Zn(2+) site is built by His-422 and Asp-495.

This sequence in the central section; belongs to the AAA ATPase family. In the C-terminal section; belongs to the peptidase M41 family. In terms of assembly, homohexamer. Requires Zn(2+) as cofactor.

The protein resides in the cell inner membrane. In terms of biological role, acts as a processive, ATP-dependent zinc metallopeptidase for both cytoplasmic and membrane proteins. Plays a role in the quality control of integral membrane proteins. The protein is ATP-dependent zinc metalloprotease FtsH 2 of Sorangium cellulosum (strain So ce56) (Polyangium cellulosum (strain So ce56)).